Reading from the N-terminus, the 109-residue chain is Juvenile hormone esterase, isoform A (109 aa).

It belongs to the type-B carboxylesterase/lipase family. In terms of tissue distribution, fat body, the site of their biosynthesis, and the hemolymph where it is secreted.

The enzyme catalyses juvenile hormone I + H2O = juvenile hormone I carboxylate + methanol + H(+). It catalyses the reaction juvenile hormone III + H2O = juvenile hormone III carboxylate + methanol + H(+). Its function is as follows. JH esterase plays a crucial role in the decrease of JH activity in lepidopteran insects, by hydrolyzing the methyl ester of JH. It is also involved in the transport of JH. The chain is Juvenile hormone esterase, isoform A from Trichoplusia ni (Cabbage looper).